The following is a 413-amino-acid chain: L-methionine gamma-lyase (413 aa).

Residues 75-77 (YGR) and 105-106 (GM) contribute to the pyridoxal 5'-phosphate site. Y131 lines the substrate pocket. 218–220 (SAT) provides a ligand contact to pyridoxal 5'-phosphate. An N6-(pyridoxal phosphate)lysine modification is found at K221. Position 365 (R365) interacts with substrate. The segment at 388–413 (RLPETAGAGREPSRTALRLPERAADR) is disordered.

The protein belongs to the trans-sulfuration enzymes family. Homotetramer; dimer of active dimers. The cofactor is pyridoxal 5'-phosphate.

It carries out the reaction L-methionine + H2O = methanethiol + 2-oxobutanoate + NH4(+). The catalysed reaction is L-homocysteine + H2O = 2-oxobutanoate + hydrogen sulfide + NH4(+) + H(+). The enzyme catalyses L-cysteine + H2O = hydrogen sulfide + pyruvate + NH4(+) + H(+). Functionally, catalyzes the alpha,gamma-elimination of L-methionine to produce methanethiol, 2-oxobutanoate and ammonia. Is probably involved in L-methionine catabolism. Is also able to catalyze the alpha,gamma-elimination of L-homocysteine, and, to a lesser extent, the alpha,beta-elimination of L-cysteine. The sequence is that of L-methionine gamma-lyase from Streptomyces avermitilis (strain ATCC 31267 / DSM 46492 / JCM 5070 / NBRC 14893 / NCIMB 12804 / NRRL 8165 / MA-4680).